A 94-amino-acid chain; its full sequence is MKTVTALLLVSLAVVAIEGQHMKSQRCVCLGAGLNMVKPVLIEKIEILPSSPSCGHMEVIATLKNGAGKRCLNPKSKFTKKIIDKIEKNNRNAR.

A signal peptide spans methionine 1–glycine 19. Cystine bridges form between cysteine 27–cysteine 54 and cysteine 29–cysteine 71.

This sequence belongs to the intercrine alpha (chemokine CxC) family.

It localises to the secreted. Functionally, ligand for cxcr3.2. Chemotactic for macrophages. The chain is C-X-C motif chemokine 11-1 (cxcl11.1) from Danio rerio (Zebrafish).